The chain runs to 220 residues: LOB domain-containing protein 31 (220 aa).

The 103-residue stretch at 10-112 folds into the LOB domain; that stretch reads GPCGACKFLR…AELAYVQTQL (103 aa). The interval 117 to 172 is disordered; that stretch reads GLPPPNSQNNSRTEAASSSNVPLISSVDSKDNMSSSSSHIPCMSQQQEQEQPKEAI. The span at 123–139 shows a compositional bias: polar residues; sequence SQNNSRTEAASSSNVPL.

This sequence belongs to the LOB domain-containing protein family. Expressed in roots, stems and flowers.

The polypeptide is LOB domain-containing protein 31 (LBD31) (Arabidopsis thaliana (Mouse-ear cress)).